Consider the following 197-residue polypeptide: Imidazoleglycerol-phosphate dehydratase (197 aa).

The protein belongs to the imidazoleglycerol-phosphate dehydratase family.

It localises to the cytoplasm. The catalysed reaction is D-erythro-1-(imidazol-4-yl)glycerol 3-phosphate = 3-(imidazol-4-yl)-2-oxopropyl phosphate + H2O. Its pathway is amino-acid biosynthesis; L-histidine biosynthesis; L-histidine from 5-phospho-alpha-D-ribose 1-diphosphate: step 6/9. In Saccharophagus degradans (strain 2-40 / ATCC 43961 / DSM 17024), this protein is Imidazoleglycerol-phosphate dehydratase.